The primary structure comprises 198 residues: Protein UNCMA_24250 (198 aa).

In terms of domain architecture, AMMECR1 spans 5–194 (EDGTLAVKTA…ETEPGGPVIE (190 aa)).

In Methanocella arvoryzae (strain DSM 22066 / NBRC 105507 / MRE50), this protein is Protein UNCMA_24250.